The chain runs to 215 residues: N-(5'-phosphoribosyl)anthranilate isomerase (215 aa).

Belongs to the TrpF family.

It carries out the reaction N-(5-phospho-beta-D-ribosyl)anthranilate = 1-(2-carboxyphenylamino)-1-deoxy-D-ribulose 5-phosphate. It participates in amino-acid biosynthesis; L-tryptophan biosynthesis; L-tryptophan from chorismate: step 3/5. The chain is N-(5'-phosphoribosyl)anthranilate isomerase from Cellvibrio japonicus (strain Ueda107) (Pseudomonas fluorescens subsp. cellulosa).